A 446-amino-acid chain; its full sequence is uncharacterized protein (446 aa).

12 consecutive transmembrane segments (helical) span residues 20–40 (LIGV…IAIV), 42–62 (SGFS…FVFE), 95–115 (WVYW…ISLF), 127–147 (VFAS…LSVF), 160–180 (AAIF…LSGG), 205–225 (LIYA…AVHL), 237–257 (LMLA…LLLV), 284–304 (IFNG…LFAV), 331–351 (WPAL…SLVL), 355–375 (IYEH…LFIL), 388–408 (GKTQ…GTLF), and 414–434 (PGFF…MIYQ).

It belongs to the amino acid-polyamine-organocation (APC) superfamily.

Its subcellular location is the cell membrane. This is an uncharacterized protein from Bacillus subtilis (strain 168).